The following is a 261-amino-acid chain: Sugar fermentation stimulation protein homolog (261 aa).

A disordered region spans residues 1–23 (MTDSAKPQNPDPGHESRRVAPLA).

It belongs to the SfsA family.

The sequence is that of Sugar fermentation stimulation protein homolog from Syntrophobacter fumaroxidans (strain DSM 10017 / MPOB).